The sequence spans 415 residues: Citrate (Re)-synthase (415 aa).

The Pyruvate carboxyltransferase domain maps to 4–275; sequence IFIIDVTNRD…GHEVDLSKAW (272 aa).

Belongs to the alpha-IPM synthase/homocitrate synthase family. Mn(2+) serves as cofactor.

It carries out the reaction oxaloacetate + acetyl-CoA + H2O = citrate + CoA + H(+). Its activity is regulated as follows. Inhibited by citrate and under aerobic conditions. Functionally, catalyzes the condensation of the acetyl group of acetyl coenzyme A (acetyl-CoA) with oxaloacetate to form citrate. This enzyme is highly Re-face stereospecific with respect to the C-2 of oxaloacetate. The sequence is that of Citrate (Re)-synthase from Dehalococcoides mccartyi (strain CBDB1).